Consider the following 168-residue polypeptide: Group IIF secretory phospholipase A2 (168 aa).

The signal sequence occupies residues 1 to 20; it reads MKKFFAIAVLAGSVVTTAHS. Cystine bridges form between cysteine 46-cysteine 138, cysteine 48-cysteine 64, cysteine 63-cysteine 120, cysteine 69-cysteine 145, cysteine 70-cysteine 113, cysteine 79-cysteine 106, and cysteine 98-cysteine 111. Positions 47, 49, and 51 each coordinate Ca(2+). Histidine 67 is an active-site residue. Aspartate 68 is a binding site for Ca(2+). N-linked (GlcNAc...) asparagine glycans are attached at residues asparagine 92 and asparagine 102. Residue aspartate 114 is part of the active site. Positions 139–168 are required for localization on the plasma membrane; that stretch reads QGPTPNCSIYDPYPEEVTCGHGLPATPVST. An N-linked (GlcNAc...) asparagine glycan is attached at asparagine 144.

This sequence belongs to the phospholipase A2 family. Ca(2+) is required as a cofactor. In terms of tissue distribution, strongly expressed in testis.

The protein localises to the secreted. The protein resides in the cell membrane. The catalysed reaction is a 1,2-diacyl-sn-glycero-3-phosphocholine + H2O = a 1-acyl-sn-glycero-3-phosphocholine + a fatty acid + H(+). It carries out the reaction 1-hexadecanoyl-2-(9Z-octadecenoyl)-sn-glycero-3-phospho-(1'-sn-glycerol) + H2O = 1-hexadecanoyl-sn-glycero-3-phospho-(1'-sn-glycerol) + (9Z)-octadecenoate + H(+). The enzyme catalyses 1-hexadecanoyl-2-(9Z,12Z-octadecadienoyl)-sn-glycero-3-phosphoethanolamine + H2O = 1-hexadecanoyl-sn-glycero-3-phosphoethanolamine + (9Z,12Z)-octadecadienoate + H(+). It catalyses the reaction 1-hexadecanoyl-2-(5Z,8Z,11Z,14Z-eicosatetraenoyl)-sn-glycero-3-phosphoethanolamine + H2O = 1-hexadecanoyl-sn-glycero-3-phosphoethanolamine + (5Z,8Z,11Z,14Z)-eicosatetraenoate + H(+). The catalysed reaction is 1-hexadecanoyl-2-(9Z-octadecenoyl)-sn-glycero-3-phosphocholine + H2O = 1-hexadecanoyl-sn-glycero-3-phosphocholine + (9Z)-octadecenoate + H(+). It carries out the reaction 1-hexadecanoyl-2-(9Z-octadecenoyl)-sn-glycero-3-phospho-L-serine + H2O = 1-hexadecanoyl-sn-glycero-3-phospho-L-serine + (9Z)-octadecenoate + H(+). Secretory calcium-dependent phospholipase A2 that primarily targets extracellular phospholipids. Hydrolyzes the ester bond of the fatty acyl group attached at the sn-2 position of phospholipids (phospholipase A2 activity), the catalytic efficiency decreasing in the following order: phosphatidylglycerols &gt; phosphatidylethanolamines &gt; phosphatidylcholines &gt; phosphatidylserines. May play a role in lipid mediator production in inflammatory conditions, by providing arachidonic acid to downstream cyclooxygenases and lipoxygenases. The polypeptide is Group IIF secretory phospholipase A2 (Pla2g2f) (Mus musculus (Mouse)).